A 525-amino-acid chain; its full sequence is Zwittermicin A synthase ZmaJ (525 aa).

The protein belongs to the ATP-dependent AMP-binding enzyme family.

It carries out the reaction holo-[peptidyl-carrier protein] + L-serine + ATP = L-seryl-[peptidyl-carrier protein] + AMP + diphosphate. It functions in the pathway antibiotic biosynthesis. Involved in the biosynthesis of the linear aminopolyol antibiotic zwittermicin A (ZmA). Specifically adenylates L-serine and loads it onto the holo form of ZmaH via a thioester linkage to the phosphopanthetheine moiety. The polypeptide is Zwittermicin A synthase ZmaJ (Bacillus cereus).